The chain runs to 110 residues: uncharacterized protein (110 aa).

2 disordered regions span residues Met1–Gln42 and Arg66–Pro110. Residues Arg36 to Leu68 adopt a coiled-coil conformation.

This is an uncharacterized protein from Homo sapiens (Human).